The chain runs to 105 residues: MTTETISGITLTTKANVYFDGKCISHGFTLADGTKKSAGVVLPSQLTFGTAAAEIMECVAGSCEYKLDGSDQWLTSKAGESFQVPANSKFDIRVTEAYHYICHYA.

The protein belongs to the nucleoside phosphorylase PpnP family.

The catalysed reaction is a purine D-ribonucleoside + phosphate = a purine nucleobase + alpha-D-ribose 1-phosphate. It carries out the reaction adenosine + phosphate = alpha-D-ribose 1-phosphate + adenine. The enzyme catalyses cytidine + phosphate = cytosine + alpha-D-ribose 1-phosphate. It catalyses the reaction guanosine + phosphate = alpha-D-ribose 1-phosphate + guanine. The catalysed reaction is inosine + phosphate = alpha-D-ribose 1-phosphate + hypoxanthine. It carries out the reaction thymidine + phosphate = 2-deoxy-alpha-D-ribose 1-phosphate + thymine. The enzyme catalyses uridine + phosphate = alpha-D-ribose 1-phosphate + uracil. It catalyses the reaction xanthosine + phosphate = alpha-D-ribose 1-phosphate + xanthine. Catalyzes the phosphorolysis of diverse nucleosides, yielding D-ribose 1-phosphate and the respective free bases. Can use uridine, adenosine, guanosine, cytidine, thymidine, inosine and xanthosine as substrates. Also catalyzes the reverse reactions. The polypeptide is Pyrimidine/purine nucleoside phosphorylase (Delftia acidovorans (strain DSM 14801 / SPH-1)).